Here is a 317-residue protein sequence, read N- to C-terminus: Transcription initiation factor IIB 3 (317 aa).

A compositionally biased stretch (basic and acidic residues) spans 1–14; sequence MERATREREKEQRE. A disordered region spans residues 1–25; sequence MERATREREKEQREQAQTNDEAQQC. The TFIIB-type zinc-finger motif lies at 21–50; the sequence is EAQQCPECNSANVITDQSERVCEDCGLVLE. 4 residues coordinate Zn(2+): cysteine 25, cysteine 28, cysteine 42, and cysteine 45. The segment at 62–83 is disordered; sequence AFNSSERDQKSRVGAPTTKTMH. 2 consecutive repeat copies span residues 136 to 219 and 230 to 311.

It belongs to the TFIIB family.

Stabilizes TBP binding to an archaeal box-A promoter. Also responsible for recruiting RNA polymerase II to the pre-initiation complex (DNA-TBP-TFIIB). This is Transcription initiation factor IIB 3 from Halobacterium salinarum (strain ATCC 700922 / JCM 11081 / NRC-1) (Halobacterium halobium).